The chain runs to 518 residues: Protein translocase subunit SecD (518 aa).

The next 6 membrane-spanning stretches (helical) occupy residues 9–29 (IFLS…NFMQ), 361–381 (LIGF…LGLF), 384–404 (IALS…QATL), 406–426 (LPGI…NVLI), 452–474 (FATI…IFGV), and 486–506 (IGII…IDIW).

This sequence belongs to the SecD/SecF family. SecD subfamily. In terms of assembly, forms a complex with SecF. Part of the essential Sec protein translocation apparatus which comprises SecA, SecYEG and auxiliary proteins SecDF-YajC and YidC.

The protein localises to the cell inner membrane. Its function is as follows. Part of the Sec protein translocase complex. Interacts with the SecYEG preprotein conducting channel. SecDF uses the proton motive force (PMF) to complete protein translocation after the ATP-dependent function of SecA. This Rickettsia felis (strain ATCC VR-1525 / URRWXCal2) (Rickettsia azadi) protein is Protein translocase subunit SecD.